The following is a 512-amino-acid chain: Cytochrome P450 4d1 (512 aa).

Heme is bound by residues glutamate 316 and cysteine 456.

This sequence belongs to the cytochrome P450 family. Requires heme as cofactor.

It is found in the endoplasmic reticulum membrane. The protein localises to the microsome membrane. Functionally, involved in the metabolism of insect hormones and in the breakdown of synthetic insecticides. The polypeptide is Cytochrome P450 4d1 (Cyp4d1) (Drosophila simulans (Fruit fly)).